Here is a 179-residue protein sequence, read N- to C-terminus: Pectinesterase inhibitor 5 (179 aa).

Positions 1-25 (MATMLINHMLFLTSLLIVVFPVANA) are cleaved as a signal peptide. 2 disulfide bridges follow: C35/C44 and C101/C141.

The protein belongs to the PMEI family. Expressed in seeds, buds, and mature flowers.

The protein localises to the secreted. It is found in the extracellular space. The protein resides in the apoplast. Functionally, pectin methylesterase (PME) inhibitor that targets PME from seeds and modulates PME activity and pectin methylesterification during seed germination. This Arabidopsis thaliana (Mouse-ear cress) protein is Pectinesterase inhibitor 5.